The following is a 245-amino-acid chain: Dehydrogenase/reductase SDR family member 6 (245 aa).

Residues 16–18 (QGI), D37, and D58 each bind NAD(+). R144 contacts substrate. The Proton acceptor role is filled by Y147. NAD(+)-binding positions include K151 and 180-184 (VDTPS). Substrate contacts are provided by R188 and R205.

Belongs to the short-chain dehydrogenases/reductases (SDR) family. As to quaternary structure, homotetramer. Detected in liver, spleen and macrophages. Widely expressed.

It localises to the cytoplasm. It carries out the reaction cis-4-hydroxy-L-proline + NAD(+) = 4-oxo-L-proline + NADH + H(+). The catalysed reaction is (R)-3-hydroxybutanoate + NAD(+) = acetoacetate + NADH + H(+). It functions in the pathway amino-acid metabolism. Its pathway is siderophore biosynthesis. Its function is as follows. NAD(H)-dependent dehydrogenase/reductase with a preference for cyclic substrates. Catalyzes stereoselective conversion of 4-oxo-L-proline to cis-4-hydroxy-L-proline, likely a detoxification mechanism for ketoprolines. Mediates the formation of 2,5-dihydroxybenzoate (2,5-DHBA), a siderophore that chelates free cytoplasmic iron and associates with LCN2, thereby regulating iron transport and homeostasis while protecting cells against free radical-induced oxidative stress. The iron-siderophore complex is imported into mitochondria, providing an iron source for mitochondrial metabolic processes in particular heme synthesis. May act as a 3-hydroxybutyrate dehydrogenase. Functionally, (Microbial infection) May play a role in susceptibility to bacterial infection by providing an assimilable source of iron that is exploited by pathogenic bacteria. Host iron-siderophore complexes can be used by bacteria to promote their own growth and pathogenicity. The chain is Dehydrogenase/reductase SDR family member 6 from Mus musculus (Mouse).